Reading from the N-terminus, the 97-residue chain is Protein E7 (97 aa).

An E7 terminal domain region spans residues 1–40; that stretch reads MRGHKPTLKEYVLDLYPEPTDLYCYEQLSDSSDEDEGLDR. The LXCXE motif; interaction with host RB1 and TMEM173/STING signature appears at 22-26; it reads LYCYE. A zinc finger lies at 58-94; it reads CHTCNTTVRLCVNSTASDLRTIQQLLMGTVNIVCPTC. The Nuclear export signal motif lies at 76 to 84; that stretch reads LRTIQQLLM.

Belongs to the papillomaviridae E7 protein family. Homodimer. Homooligomer. Interacts with host RB1; this interaction induces dissociation of RB1-E2F1 complex thereby disrupting RB1 activity. Interacts with host EP300; this interaction represses EP300 transcriptional activity. Interacts with protein E2; this interaction inhibits E7 oncogenic activity. Interacts with host TMEM173/STING; this interaction impairs the ability of TMEM173/STING to sense cytosolic DNA and promote the production of type I interferon (IFN-alpha and IFN-beta). Post-translationally, highly phosphorylated.

It is found in the host cytoplasm. The protein localises to the host nucleus. Its function is as follows. Plays a role in viral genome replication by driving entry of quiescent cells into the cell cycle. Stimulation of progression from G1 to S phase allows the virus to efficiently use the cellular DNA replicating machinery to achieve viral genome replication. E7 protein has both transforming and trans-activating activities. Induces the disassembly of the E2F1 transcription factor from RB1, with subsequent transcriptional activation of E2F1-regulated S-phase genes. Interferes with host histone deacetylation mediated by HDAC1 and HDAC2, leading to transcription activation. Also plays a role in the inhibition of both antiviral and antiproliferative functions of host interferon alpha. Interaction with host TMEM173/STING impairs the ability of TMEM173/STING to sense cytosolic DNA and promote the production of type I interferon (IFN-alpha and IFN-beta). The sequence is that of Protein E7 from Human papillomavirus 33.